A 662-amino-acid chain; its full sequence is Probable protein phosphatase CG10417 (662 aa).

The PPM-type phosphatase domain occupies 23–564 (AVGASSMQGW…DNMTAVIVQF (542 aa)). Mn(2+)-binding residues include Asp-57 and Gly-58. Disordered stretches follow at residues 219-275 (DGVA…FKHT) and 288-374 (GSND…DEDQ). Composition is skewed to polar residues over residues 238 to 252 (DSNT…STKN), 261 to 275 (NDQN…FKHT), and 288 to 319 (GSND…INSS). Residues Ser-289 and Ser-306 each carry the phosphoserine modification. Residues 320–334 (QDDEFTDDDADYEEN) show a composition bias toward acidic residues. Residues 337 to 347 (VKSPDTSSAES) show a composition bias toward polar residues. A compositionally biased stretch (acidic residues) spans 349–374 (DCTENDDDGDEDGNEDSDEEETDEDQ). Residues Asp-506 and Asp-555 each contribute to the Mn(2+) site. A compositionally biased stretch (polar residues) spans 591–609 (VSHSLNDQSASKRCASQNA). The tract at residues 591–662 (VSHSLNDQSA…KEVTIIVSSS (72 aa)) is disordered. 3 positions are modified to phosphoserine: Ser-592, Ser-594, and Ser-599. Residues 616-637 (LEKNNSKRLKTDLEQENIKDRT) are compositionally biased toward basic and acidic residues. Thr-637 carries the phosphothreonine modification. Ser-639 and Ser-641 each carry phosphoserine.

It belongs to the PP2C family. Mg(2+) serves as cofactor. It depends on Mn(2+) as a cofactor.

The enzyme catalyses O-phospho-L-seryl-[protein] + H2O = L-seryl-[protein] + phosphate. It carries out the reaction O-phospho-L-threonyl-[protein] + H2O = L-threonyl-[protein] + phosphate. This Drosophila melanogaster (Fruit fly) protein is Probable protein phosphatase CG10417.